The sequence spans 302 residues: AT-hook motif nuclear-localized protein 29 (302 aa).

Residues Met-1–Ser-95 form a disordered region. A compositionally biased stretch (pro residues) spans Gln-32–Gln-44. Positions Lys-72–Lys-84 form a DNA-binding region, a.T hook. Residues Pro-96–Gly-241 form the PPC domain. The interval Gly-164–Leu-169 is required for the binding to non-AHL interactors. Residues Pro-229 to Gln-279 are disordered. The span at Gly-237–Gly-251 shows a compositional bias: gly residues.

In terms of assembly, homodimer. Interacts with AHL5, AHL12, AHL25, AHL27, TCP4, TCP13 and EF114. Expressed in the hypocotyl and the vascular tissue of seedling.

It localises to the nucleus. In terms of biological role, transcription factor that specifically binds AT-rich DNA sequences related to the nuclear matrix attachment regions (MARs). Acts redundantly with AHL18, AHL22 and AHL27 in the regulation of flowering and regulation of the hypocotyl elongation. Acts redundantly with AHL27/ESC to modulate hypocotyl growth inhibition in response to light. The polypeptide is AT-hook motif nuclear-localized protein 29 (Arabidopsis thaliana (Mouse-ear cress)).